The chain runs to 200 residues: GTP-dependent dephospho-CoA kinase (200 aa).

The GTP site is built by Asp-56, Val-57, Val-58, Asp-75, and Glu-132.

Belongs to the GTP-dependent DPCK family.

It catalyses the reaction 3'-dephospho-CoA + GTP = GDP + CoA + H(+). It participates in cofactor biosynthesis; coenzyme A biosynthesis. Catalyzes the GTP-dependent phosphorylation of the 3'-hydroxyl group of dephosphocoenzyme A to form coenzyme A (CoA). The polypeptide is GTP-dependent dephospho-CoA kinase (Caldivirga maquilingensis (strain ATCC 700844 / DSM 13496 / JCM 10307 / IC-167)).